The sequence spans 199 residues: Peptidyl-prolyl cis-trans isomerase CYP22 (199 aa).

The region spanning 35-198 (FFDVSIGGIP…LAVVITECGE (164 aa)) is the PPIase cyclophilin-type domain.

Belongs to the cyclophilin-type PPIase family. In terms of tissue distribution, ubiquitous.

The enzyme catalyses [protein]-peptidylproline (omega=180) = [protein]-peptidylproline (omega=0). PPIases accelerate the folding of proteins. It catalyzes the cis-trans isomerization of proline imidic peptide bonds in oligopeptides. In Arabidopsis thaliana (Mouse-ear cress), this protein is Peptidyl-prolyl cis-trans isomerase CYP22 (CYP22).